Reading from the N-terminus, the 478-residue chain is Ribulose bisphosphate carboxylase large chain (478 aa).

A propeptide spanning residues 1–2 is cleaved from the precursor; that stretch reads MS. Pro-3 carries the N-acetylproline modification. Lys-14 is modified (N6,N6,N6-trimethyllysine). Asn-123 and Thr-173 together coordinate substrate. Lys-175 functions as the Proton acceptor in the catalytic mechanism. Residue Lys-177 coordinates substrate. 3 residues coordinate Mg(2+): Lys-201, Asp-203, and Glu-204. At Lys-201 the chain carries N6-carboxylysine. His-294 (proton acceptor) is an active-site residue. Substrate-binding residues include Arg-295, His-327, and Ser-379.

It belongs to the RuBisCO large chain family. Type I subfamily. In terms of assembly, heterohexadecamer of 8 large chains and 8 small chains; disulfide-linked. The disulfide link is formed within the large subunit homodimers. Mg(2+) serves as cofactor. In terms of processing, the disulfide bond which can form in the large chain dimeric partners within the hexadecamer appears to be associated with oxidative stress and protein turnover.

Its subcellular location is the plastid. The protein resides in the chloroplast. The catalysed reaction is 2 (2R)-3-phosphoglycerate + 2 H(+) = D-ribulose 1,5-bisphosphate + CO2 + H2O. The enzyme catalyses D-ribulose 1,5-bisphosphate + O2 = 2-phosphoglycolate + (2R)-3-phosphoglycerate + 2 H(+). RuBisCO catalyzes two reactions: the carboxylation of D-ribulose 1,5-bisphosphate, the primary event in carbon dioxide fixation, as well as the oxidative fragmentation of the pentose substrate in the photorespiration process. Both reactions occur simultaneously and in competition at the same active site. In Drimys granadensis, this protein is Ribulose bisphosphate carboxylase large chain.